The primary structure comprises 408 residues: Putative F-box protein At1g53550 (408 aa).

In terms of domain architecture, F-box spans 29 to 74 (TCYFDPIPVDLVINILSRLSLECIARCRCVSKLWSSIIRRPNYNQL).

The protein is Putative F-box protein At1g53550 of Arabidopsis thaliana (Mouse-ear cress).